Here is a 476-residue protein sequence, read N- to C-terminus: Oogenesin-2 (476 aa).

One copy of the LRR 1; degenerate repeat lies at 97 to 121 (RCKLREITLSHDLVVVWAGSHEVEG). Residues 176–200 (HLHCRKLKIYGLTKAAVIEMFKIVH) form an LRR 2; degenerate repeat. One copy of the LRR 3; degenerate repeat lies at 201–226 (AEYIEDLELSCLCLEYLDFLNPYLKQ). The LRR 4; degenerate repeat unit spans residues 227–264 (MSNLLSLTLDEIIYTLNIDDYRNLNEEKVITVISHLPT). 4 LRR repeats span residues 265–285 (FHHL…LRCL), 286–317 (KKPL…FELR), 342–369 (RHTL…ALSQ), and 370–394 (CYQL…LLHH).

It belongs to the PRAME family. In terms of tissue distribution, expressed in ovary, specifically in oocytes. Detected in follicles with two layers of granulosa cells, and are present in early as well as large antral follicles.

The sequence is that of Oogenesin-2 from Mus musculus (Mouse).